We begin with the raw amino-acid sequence, 403 residues long: Cytoplasmic tRNA 2-thiolation protein 2 (403 aa).

It belongs to the CTU2/NCS2 family.

It localises to the cytoplasm. The protein operates within tRNA modification; 5-methoxycarbonylmethyl-2-thiouridine-tRNA biosynthesis. Functionally, plays a central role in 2-thiolation of mcm(5)S(2)U at tRNA wobble positions of tRNA(Lys), tRNA(Glu) and tRNA(Gln). May act by forming a heterodimer with NCS6/CTU1 that ligates sulfur from thiocarboxylated URM1 onto the uridine of tRNAs at wobble position. In Drosophila willistoni (Fruit fly), this protein is Cytoplasmic tRNA 2-thiolation protein 2.